The following is a 513-amino-acid chain: tRNA A64-2'-O-ribosylphosphate transferase (513 aa).

Functionally, tRNA backbone modifying enzyme that mediates initiator/ elongator tRNA discrimination. This enzyme modifies exclusively the initiator tRNA in position 64 using 5'-phosphoribosyl-1'-pyrophosphate as the modification donor. Recognize the stem-loop IV region that is unique in eukaryotic cytoplasmic initiator tRNAs. This chain is tRNA A64-2'-O-ribosylphosphate transferase (RIT1), found in Saccharomyces cerevisiae (strain ATCC 204508 / S288c) (Baker's yeast).